We begin with the raw amino-acid sequence, 540 residues long: Chaperonin GroEL (540 aa).

Residues 29 to 32 (TIGP), 86 to 90 (DGTTT), G413, 476 to 478 (NAA), and D492 contribute to the ATP site.

The protein belongs to the chaperonin (HSP60) family. Forms a cylinder of 14 subunits composed of two heptameric rings stacked back-to-back. Interacts with the co-chaperonin GroES.

The protein localises to the cytoplasm. The catalysed reaction is ATP + H2O + a folded polypeptide = ADP + phosphate + an unfolded polypeptide.. In terms of biological role, together with its co-chaperonin GroES, plays an essential role in assisting protein folding. The GroEL-GroES system forms a nano-cage that allows encapsulation of the non-native substrate proteins and provides a physical environment optimized to promote and accelerate protein folding. The polypeptide is Chaperonin GroEL (Staphylococcus saprophyticus subsp. saprophyticus (strain ATCC 15305 / DSM 20229 / NCIMB 8711 / NCTC 7292 / S-41)).